We begin with the raw amino-acid sequence, 360 residues long: Photosystem II protein D1 (360 aa).

The next 3 membrane-spanning stretches (helical) occupy residues 29–46 (YIGWFGVLMIPTLLTATT), 118–133 (HFLLGVCGWIGREWEF), and 142–156 (WISVAFTAPVAAASA). A chlorophyll a-binding site is contributed by His118. Trp126 is a pheophytin a binding site. Residues Asp170 and Glu189 each contribute to the [CaMn4O5] cluster site. The chain crosses the membrane as a helical span at residues 197–218 (FHQLGVAGVFGGSLFSAMHGSL). Residue His198 participates in chlorophyll a binding. Residues His215 and 264–265 (SF) each bind a quinone. His215 contacts Fe cation. Residue His272 participates in Fe cation binding. A helical membrane pass occupies residues 274–288 (FLGLWPVVGIWFTAL). His332, Glu333, Asp342, and Ala344 together coordinate [CaMn4O5] cluster. Positions 345–360 (SGESLPVALTAPAVIG) are excised as a propeptide.

Belongs to the reaction center PufL/M/PsbA/D family. As to quaternary structure, PSII is composed of 1 copy each of membrane proteins PsbA, PsbB, PsbC, PsbD, PsbE, PsbF, PsbH, PsbI, PsbJ, PsbK, PsbL, PsbM, PsbT, PsbX, PsbY, PsbZ, Psb30/Ycf12, at least 3 peripheral proteins of the oxygen-evolving complex and a large number of cofactors. It forms dimeric complexes. Requires The D1/D2 heterodimer binds P680, chlorophylls that are the primary electron donor of PSII, and subsequent electron acceptors. It shares a non-heme iron and each subunit binds pheophytin, quinone, additional chlorophylls, carotenoids and lipids. D1 provides most of the ligands for the Mn4-Ca-O5 cluster of the oxygen-evolving complex (OEC). There is also a Cl(-1) ion associated with D1 and D2, which is required for oxygen evolution. The PSII complex binds additional chlorophylls, carotenoids and specific lipids. as cofactor. In terms of processing, tyr-161 forms a radical intermediate that is referred to as redox-active TyrZ, YZ or Y-Z. Post-translationally, C-terminally processed by CTPA; processing is essential to allow assembly of the oxygen-evolving complex and thus photosynthetic growth.

It is found in the plastid. The protein resides in the chloroplast thylakoid membrane. It carries out the reaction 2 a plastoquinone + 4 hnu + 2 H2O = 2 a plastoquinol + O2. Photosystem II (PSII) is a light-driven water:plastoquinone oxidoreductase that uses light energy to abstract electrons from H(2)O, generating O(2) and a proton gradient subsequently used for ATP formation. It consists of a core antenna complex that captures photons, and an electron transfer chain that converts photonic excitation into a charge separation. The D1/D2 (PsbA/PsbD) reaction center heterodimer binds P680, the primary electron donor of PSII as well as several subsequent electron acceptors. This is Photosystem II protein D1 from Guillardia theta (Cryptophyte).